Consider the following 508-residue polypeptide: Steroid 17-alpha-hydroxylase/17,20 lyase (508 aa).

Residue asparagine 202 coordinates substrate. Cysteine 442 is a binding site for heme.

This sequence belongs to the cytochrome P450 family. Heme serves as cofactor.

Its subcellular location is the endoplasmic reticulum membrane. The protein localises to the microsome membrane. The catalysed reaction is a C21-steroid + reduced [NADPH--hemoprotein reductase] + O2 = a 17alpha-hydroxy-C21-steroid + oxidized [NADPH--hemoprotein reductase] + H2O + H(+). It carries out the reaction progesterone + reduced [NADPH--hemoprotein reductase] + O2 = 17alpha-hydroxyprogesterone + oxidized [NADPH--hemoprotein reductase] + H2O + H(+). The enzyme catalyses pregnenolone + reduced [NADPH--hemoprotein reductase] + O2 = 17alpha-hydroxypregnenolone + oxidized [NADPH--hemoprotein reductase] + H2O + H(+). It catalyses the reaction 17alpha-hydroxyprogesterone + reduced [NADPH--hemoprotein reductase] + O2 = androst-4-ene-3,17-dione + acetate + oxidized [NADPH--hemoprotein reductase] + H2O + 2 H(+). The catalysed reaction is 17alpha-hydroxyprogesterone + reduced [NADPH--hemoprotein reductase] + O2 = 16alpha,17alpha-dihydroxyprogesterone + oxidized [NADPH--hemoprotein reductase] + H2O + H(+). It carries out the reaction 16alpha,17alpha-dihydroxyprogesterone + reduced [NADPH--hemoprotein reductase] + O2 = 6beta,16alpha,17alpha-trihydroxyprogesterone + oxidized [NADPH--hemoprotein reductase] + H2O + H(+). The enzyme catalyses 17alpha-hydroxypregnenolone + reduced [NADPH--hemoprotein reductase] + O2 = 3beta-hydroxyandrost-5-en-17-one + acetate + oxidized [NADPH--hemoprotein reductase] + H2O + 2 H(+). It catalyses the reaction 16alpha,17alpha-dihydroxypregnenolone + reduced [NADPH--hemoprotein reductase] + O2 = 3beta,16alpha-dihydroxy-androst-5-en-17-one + acetate + oxidized [NADPH--hemoprotein reductase] + H2O + 2 H(+). The catalysed reaction is 3beta-hydroxyandrost-5-en-17-one + reduced [NADPH--hemoprotein reductase] + O2 = 3beta,16alpha-dihydroxy-androst-5-en-17-one + oxidized [NADPH--hemoprotein reductase] + H2O + H(+). It carries out the reaction androst-4-ene-3,17-dione + reduced [NADPH--hemoprotein reductase] + O2 = 16alpha-hydroxyandrost-4-ene-3,17-dione + oxidized [NADPH--hemoprotein reductase] + H2O + H(+). Its pathway is steroid hormone biosynthesis. It functions in the pathway steroid biosynthesis; glucocorticoid biosynthesis. Regulated predominantly by intracellular cAMP levels. The 17,20-lyase activity is stimulated by cytochrome b5, which acts as an allosteric effector increasing the Vmax of the lyase activity. A cytochrome P450 monooxygenase involved in corticoid and androgen biosynthesis. Catalyzes 17-alpha hydroxylation of C21 steroids, which is common for both pathways. A second oxidative step, required only for androgen synthesis, involves an acyl-carbon cleavage. The 17-alpha hydroxy intermediates, as part of adrenal glucocorticoids biosynthesis pathway, are precursors of cortisol. Hydroxylates steroid hormones, pregnenolone and progesterone to form 17-alpha hydroxy metabolites, followed by the cleavage of the C17-C20 bond to form C19 steroids, dehydroepiandrosterone (DHEA) and androstenedione. Has 16-alpha hydroxylase activity. Catalyzes 16-alpha hydroxylation of 17-alpha hydroxy pregnenolone, followed by the cleavage of the C17-C20 bond to form 16-alpha-hydroxy DHEA. Also 16-alpha hydroxylates androgens, relevant for estriol synthesis. Mechanistically, uses molecular oxygen inserting one oxygen atom into a substrate, and reducing the second into a water molecule, with two electrons provided by NADPH via cytochrome P450 reductase (CPR; NADPH-ferrihemoprotein reductase). The sequence is that of Steroid 17-alpha-hydroxylase/17,20 lyase (CYP17A1) from Papio cynocephalus (Yellow baboon).